A 545-amino-acid chain; its full sequence is Eukaryotic translation initiation factor 3 subunit D-2 (545 aa).

Residues 94 to 148 are disordered; that stretch reads FQRGRFRGNTRNNPRTRGRTGRGGAVTGTGGNQPGVGVNERTKYGKGRDNRRQMG. Basic residues predominate over residues 95–113; that stretch reads QRGRFRGNTRNNPRTRGRT. Positions 114–127 are enriched in gly residues; that stretch reads GRGGAVTGTGGNQP. Over residues 133-145 the composition is skewed to basic and acidic residues; it reads ERTKYGKGRDNRR. An RNA gate region spans residues 287–301; sequence QFDLLTVNETALEPP.

It belongs to the eIF-3 subunit D family. As to quaternary structure, component of the eukaryotic translation initiation factor 3 (eIF-3) complex. The eIF-3 complex interacts with pix.

Its subcellular location is the cytoplasm. MRNA cap-binding component of the eukaryotic translation initiation factor 3 (eIF-3) complex, which is involved in protein synthesis of a specialized repertoire of mRNAs and, together with other initiation factors, stimulates binding of mRNA and methionyl-tRNAi to the 40S ribosome. The eIF-3 complex specifically targets and initiates translation of a subset of mRNAs involved in cell proliferation. In the eIF-3 complex, eif3d specifically recognizes and binds the 7-methylguanosine cap of a subset of mRNAs. The sequence is that of Eukaryotic translation initiation factor 3 subunit D-2 from Drosophila pseudoobscura pseudoobscura (Fruit fly).